A 1021-amino-acid chain; its full sequence is Chondroitin sulfate ABC endolyase (1021 aa).

The signal sequence occupies residues 1-24; that stretch reads MPIFRFTALAMTLGLLSAPYNAMA. Positions 43, 70, 73, and 211 each coordinate Na(+). Residue His501 is the Proton acceptor of the active site. The active-site Proton donor is the Tyr508.

This sequence belongs to the polysaccharide lyase 8 family. In terms of assembly, monomer.

It localises to the periplasm. It catalyses the reaction Endolytic cleavage of (1-&gt;4)-beta-galactosaminic bonds between N-acetylgalactosamine and either D-glucuronic acid or L-iduronic acid to produce a mixture of Delta(4)-unsaturated oligosaccharides of different sizes that are ultimately degraded to Delta(4)-unsaturated tetra- and disaccharides.. Is inhibited by Zn(2+), Ni(2+), Fe(2+) and Cu(2+). Its function is as follows. Endolytic, broad-specificity glycosaminoglycan lyase, which degrades the polysaccharides chondroitin, chondroitin-4-sulfate, chondroitin-6-sulfate, dermatan sulfate and to a lesser extent hyaluronan, by beta-elimination of 1,4-hexosaminidic bond to unsaturated tetrasaccharides and disaccharides. Is not active against keratan sulfate, heparan sulfate, and heparin. Is able to promote functional recovery in the injured central nervous system (CNS), via its role in the disruption of the normal organization of the extracellular matrix (ECM). The chain is Chondroitin sulfate ABC endolyase from Proteus vulgaris.